Reading from the N-terminus, the 109-residue chain is MTETEFLALVDQVLDSIESQADDWAASQDVDIETSRSGNVLTLVFEDGTHVVVNSQAAMQEIWVAARSGGFHYRYDGQHWNDTRGGPRLPDALSQICSEAAGVPVAVRL.

The protein belongs to the frataxin family.

Involved in iron-sulfur (Fe-S) cluster assembly. May act as a regulator of Fe-S biogenesis. The polypeptide is Iron-sulfur cluster assembly protein CyaY (Bordetella petrii (strain ATCC BAA-461 / DSM 12804 / CCUG 43448)).